The chain runs to 131 residues: MPTFSQLVRKGRTAPRYKTASPALQGSPQRRGVCTRVYTQTPKKPNSALRKVARVRLTNGIEVTTYIPGIGHNLQEHSIVLIRGGRVKDLPGVRYHVVRGTLDSVGVANRKQGRSKYGAKRAKGGAAAGKK.

Positions 1–32 (MPTFSQLVRKGRTAPRYKTASPALQGSPQRRG) are disordered. A 3-methylthioaspartic acid modification is found at aspartate 89. The tract at residues 110 to 131 (RKQGRSKYGAKRAKGGAAAGKK) is disordered. The segment covering 111–131 (KQGRSKYGAKRAKGGAAAGKK) has biased composition (basic residues).

It belongs to the universal ribosomal protein uS12 family. Part of the 30S ribosomal subunit. Contacts proteins S8 and S17. May interact with IF1 in the 30S initiation complex.

In terms of biological role, with S4 and S5 plays an important role in translational accuracy. Functionally, interacts with and stabilizes bases of the 16S rRNA that are involved in tRNA selection in the A site and with the mRNA backbone. Located at the interface of the 30S and 50S subunits, it traverses the body of the 30S subunit contacting proteins on the other side and probably holding the rRNA structure together. The combined cluster of proteins S8, S12 and S17 appears to hold together the shoulder and platform of the 30S subunit. This is Small ribosomal subunit protein uS12 from Acidobacterium capsulatum (strain ATCC 51196 / DSM 11244 / BCRC 80197 / JCM 7670 / NBRC 15755 / NCIMB 13165 / 161).